A 179-amino-acid polypeptide reads, in one-letter code: SCAN domain-containing protein 1 (179 aa).

The tract at residues 1 to 104 (MAATEPILAA…PGPAGSRLGP (104 aa)) is disordered. Residues 52–80 (SPNAAVPEAIPTPRAAASAALELPLGPAP) show a composition bias toward low complexity. One can recognise an SCAN box domain in the interval 108–166 (RQRFRQFRYQDAAGPREAFRQLRELSRQWLRPDIRTKEQIVEMLVQEQLLAILPEAARA).

As to quaternary structure, interacts with ZNF202.

Its subcellular location is the nucleus. Functionally, may regulate transcriptional activity. In Homo sapiens (Human), this protein is SCAN domain-containing protein 1 (SCAND1).